The chain runs to 1002 residues: Inversin-B (1002 aa).

16 ANK repeats span residues 9 to 39 (SLAS…VIDQ), 43 to 72 (LGRT…KVNR), 76 to 105 (SGRT…DCTH), 109 to 140 (CDIT…QVDA), 144 to 173 (RKQT…NIGI), 177 to 209 (EGKI…TESL), 216 to 246 (EGRT…NVAP), 250 to 279 (LFRT…SPNI), 284 to 313 (QGAT…VRDE), 317 to 346 (EGRT…KLEV), 352 to 381 (YGGT…QADA), 385 to 414 (MKHT…KVHL), 418 to 447 (DGRS…NPDA), 451 to 480 (EGRT…DPNI), 484 to 513 (NGRT…FPNQ), and 519 to 549 (ERYT…SIAA). Positions 486-494 (RTALHWSCN) match the D-box 1 motif. An IQ 1 domain is found at 551 to 580 (QDIAAFKIQAVYKGHKVRRAFQERKNLLMK). Composition is skewed to basic and acidic residues over residues 586-599 (KGAA…ENRQ), 609-621 (KQKD…RQNK), and 643-656 (AEDR…ENLE). Disordered regions lie at residues 586–804 (KGAA…KGRR) and 862–886 (SAKT…SSSA). 2 stretches are compositionally biased toward polar residues: residues 670–680 (QRITAQIQSSP) and 687–706 (NSIQ…SSPL). Basic and acidic residues-rich tracts occupy residues 733 to 763 (HQME…EERK) and 770 to 796 (QSSD…EGKK). Positions 959–967 (RKQLFQRKN) match the D-box 2 motif. The IQ 2 domain occupies 966 to 995 (KNHAATVIQKAWRTYWVRKSSCKTRHSRSQ).

In terms of assembly, interacts with apc2. Binds calmodulin.

Its subcellular location is the cytoplasm. It localises to the cytoskeleton. In terms of biological role, required for normal renal development and establishment of left-right axis. Probably acts as a molecular switch between different Wnt signaling pathways. Inhibits the canonical Wnt pathway by targeting cytoplasmic disheveled for degradation by the ubiquitin-proteasome. This suggests that it is required in renal development to oppose the repression of terminal differentiation of tubular epithelial cells by Wnt signaling. Plays a central role in convergent extension movements in gastrulating embryos, a processus regulated by Wnt signaling. In Xenopus laevis (African clawed frog), this protein is Inversin-B (invs-b).